A 282-amino-acid polypeptide reads, in one-letter code: MNNTIFNVLNKIKNTNISLNKADVYHILEHIINKDYQWIISNLDHKLTKKQIYKIDQILDLLKQNYPLAYILKSKYFYSNIFFVNKDVLIPRNESELIIDHVSEFVKNNNDLLIVDLCTGSGCLGISCALLNDQNKVILTDISYKSLKVANKNIKKFNLINTSCLNGNFIDVLIKNNLKANLIICNPPYIDINDQNIDKNVIDFEPSIALFAPNKGLYFYEILIKNIDKIVDTNKNFLIVLEFGWLQKDSIEQLLINNCLKYKWEFKKDYNDYWRNLIIKNF.

S-adenosyl-L-methionine-binding residues include D141, F169, and N186. 186-189 (NPPY) is a binding site for substrate.

The protein belongs to the protein N5-glutamine methyltransferase family. PrmC subfamily.

It catalyses the reaction L-glutaminyl-[peptide chain release factor] + S-adenosyl-L-methionine = N(5)-methyl-L-glutaminyl-[peptide chain release factor] + S-adenosyl-L-homocysteine + H(+). Methylates the class 1 translation termination release factors RF1/PrfA and RF2/PrfB on the glutamine residue of the universally conserved GGQ motif. In Mycoplasma mycoides subsp. mycoides SC (strain CCUG 32753 / NCTC 10114 / PG1), this protein is Release factor glutamine methyltransferase.